The chain runs to 321 residues: MLNLKVIYFGTPQFAATVLEDLLHHDVNVIGVVTRVDKPQKRSSQPIPSPVKTLALSKNIPLLQPEKASDPQFIEQLKAFEADVFIVVAYGAILRQVVLNIPKYGCYNLHAGLLPAYRGAAPIQRCIMDGVTQSGNTVIRMDAGMDTGDIAGVSYVPVGPDMTAGELAEALSAQGGEILIKTLQQISDGTISHTPQDSSKASIAPKLSKEEGFVLWNHPAEKVYAQIRGVTPAPGAWTLYSYQDKPAKRLVIRKASLASNKGIYGNPGDVIVSDQQELLIACAEGAICLKEIQPEGKGAMDSKTFLNGHSNHKLKLSFQNN.

112-115 (GLLP) serves as a coordination point for (6S)-5,6,7,8-tetrahydrofolate.

The protein belongs to the Fmt family.

It carries out the reaction L-methionyl-tRNA(fMet) + (6R)-10-formyltetrahydrofolate = N-formyl-L-methionyl-tRNA(fMet) + (6S)-5,6,7,8-tetrahydrofolate + H(+). In terms of biological role, attaches a formyl group to the free amino group of methionyl-tRNA(fMet). The formyl group appears to play a dual role in the initiator identity of N-formylmethionyl-tRNA by promoting its recognition by IF2 and preventing the misappropriation of this tRNA by the elongation apparatus. In Chlamydia caviae (strain ATCC VR-813 / DSM 19441 / 03DC25 / GPIC) (Chlamydophila caviae), this protein is Methionyl-tRNA formyltransferase.